The chain runs to 193 residues: GTP cyclohydrolase 1 (193 aa).

Residues Cys-73, His-76, and Cys-144 each coordinate Zn(2+).

This sequence belongs to the GTP cyclohydrolase I family. In terms of assembly, homomer.

It carries out the reaction GTP + H2O = 7,8-dihydroneopterin 3'-triphosphate + formate + H(+). It participates in cofactor biosynthesis; 7,8-dihydroneopterin triphosphate biosynthesis; 7,8-dihydroneopterin triphosphate from GTP: step 1/1. The sequence is that of GTP cyclohydrolase 1 from Hyperthermus butylicus (strain DSM 5456 / JCM 9403 / PLM1-5).